We begin with the raw amino-acid sequence, 520 residues long: Cell division control protein 3 (520 aa).

Residues 1–24 (MSLKEEQVSIKQDPEQEERQHDQF) are compositionally biased toward basic and acidic residues. The disordered stretch occupies residues 1–83 (MSLKEEQVSI…SSQSEKGQVL (83 aa)). Serine 2 is subject to N-acetylserine. Serine 2 bears the Phosphoserine mark. Lysine 4 participates in a covalent cross-link: Glycyl lysine isopeptide (Lys-Gly) (interchain with G-Cter in SUMO). The residue at position 9 (serine 9) is a Phosphoserine. Glycyl lysine isopeptide (Lys-Gly) (interchain with G-Cter in SUMO) cross-links involve residues lysine 11 and lysine 30. Threonine 47 is modified (phosphothreonine). The segment covering 51–64 (DSERFEAAESDVKV) has biased composition (basic and acidic residues). Serine 60 is modified (phosphoserine). Residue lysine 63 forms a Glycyl lysine isopeptide (Lys-Gly) (interchain with G-Cter in SUMO) linkage. Phosphoserine is present on serine 77. The region spanning 116–411 (NGFSFNLLCV…ENYRSSKLAK (296 aa)) is the Septin-type G domain. The G1 motif stretch occupies residues 126 to 133 (GPDGIGKT). 126 to 133 (GPDGIGKT) is a GTP binding site. Acidic residues predominate over residues 156–167 (ELANDQEEEEGQ). The segment at 156 to 181 (ELANDQEEEEGQGEGHENQSQEQRHK) is disordered. Residues 168-179 (GEGHENQSQEQR) are compositionally biased toward basic and acidic residues. Position 175 is a phosphoserine (serine 175). The G3 motif stretch occupies residues 204-207 (DTEG). Residues glycine 207, 287–295 (KSDILTDEE), glycine 344, and arginine 360 each bind GTP. Residues 286 to 289 (AKSD) form a G4 motif region. A Glycyl lysine isopeptide (Lys-Gly) (interchain with G-Cter in SUMO) cross-link involves residue lysine 287. A coiled-coil region spans residues 427–508 (ISKQQEEKTL…INSASPNVNH (82 aa)). The residue at position 468 (threonine 468) is a Phosphothreonine. The interval 496-520 (ELSINSASPNVNHSPVPTKKKGFLR) is disordered. A compositionally biased stretch (polar residues) spans 497–510 (LSINSASPNVNHSP). Position 509 is a phosphoserine (serine 509).

Belongs to the TRAFAC class TrmE-Era-EngA-EngB-Septin-like GTPase superfamily. Septin GTPase family. In terms of assembly, component of the septin complex which consists of CDC3, CDC10, CDC11, CDC12 and probably SHS1 and rearranges to a cortical collar of highly ordered filaments at the mother-bud-neck. A complex formed by CDC3, CDC10, CDC11 and CDC12 is capable of forming long filaments in vitro and the components seem to be present in a 2:2:2:2 arrangement in vivo. The filaments are proposed to be formed by the end-to-end polymerization of CDC3-CDC12-CDC11 complexes with CDC10 serving as a bridge to bundle the polymers into paired filaments. Component of the GIN4 complex composed of at least BNI5, CDC3, CDC10, CDC11, CDC12, GIN4, NAP1 and SHS1. Self-associates. Interacts with SIZ1 and SYP1. In terms of processing, phosphorylated by CDC28. Phosphorylation at the end of G1 may facilitate initiation of a new cell cycle by promoting disassembly of the obsolete septin ring from the previous cell cycle. Sumoylated during mitosis on the mother cell side of the bud neck by UBC9/SIZ1. Sumoylation probably plays a central role in regulating septin ring disassembly during the cell cycle.

Its subcellular location is the membrane. The protein localises to the bud neck. Functionally, septins are GTPases involved in cytokinesis that assemble early in the cell cycle as a patch at the incipient bud site and form a ring approximate 15 minutes before bud emergence, which transforms into an hour-glass shaped collar of cortical filaments that spans both sides of the mother-bud neck. This collar persists until just before cytokinesis, when it splits into two rings that occupy opposite sides of the neck. The septins at the bud neck serve as a structural scaffold that recruits different components involved in diverse processes at specific stages during the cell cycle. Many proteins bind asymmetrically to the septin collar. The septin assembly is regulated by protein kinases GIN4 and/or CLA4. May act by recruiting MYO1 and HOF1, a protein involved in septation, to the site of cleavage. Septins are also involved in cell morphogenesis, bud site selection, chitin deposition, cell cycle regulation, cell compartmentalization and spore wall formation. This Saccharomyces cerevisiae (strain ATCC 204508 / S288c) (Baker's yeast) protein is Cell division control protein 3 (CDC3).